The sequence spans 283 residues: Transcription factor bHLH104 (283 aa).

A disordered region spans residues 96–134 (VEINSGSSGGAVKEEQEHLDDDCSRKRARTGSCSRGGGT). The segment covering 107–120 (VKEEQEHLDDDCSR) has biased composition (basic and acidic residues). The bHLH domain maps to 130 to 181 (RGGGTKACRERLRREKLNERFMDLSSVLEPGRTPKTDKPAILDDAIRILNQL).

Homodimer. Interacts with BTS and BHLH47/PYE.

Its subcellular location is the nucleus. In Arabidopsis thaliana (Mouse-ear cress), this protein is Transcription factor bHLH104 (BHLH104).